The chain runs to 656 residues: Leucine aminopeptidase 2 (656 aa).

Substrate contacts are provided by residues 173 to 175 (QLE) and 302 to 307 (PYGGME). A Zn(2+)-binding site is contributed by H331. E332 acts as the Proton acceptor in catalysis. Zn(2+) contacts are provided by H335 and E354. Y420 serves as the catalytic Proton donor.

Belongs to the peptidase M1 family. It depends on Zn(2+) as a cofactor.

The protein localises to the cytoplasm. The protein resides in the nucleus. The catalysed reaction is an epoxide + H2O = an ethanediol. Its function is as follows. Aminopeptidase that preferentially cleaves di- and tripeptides. Also has low epoxide hydrolase activity (in vitro). Can hydrolyze the epoxide leukotriene LTA(4) but it forms preferentially 5,6-dihydroxy-7,9,11,14-eicosatetraenoic acid rather than the cytokine leukotriene B(4) as the product compared to the homologous mammalian enzyme (in vitro). The chain is Leucine aminopeptidase 2 from Vanderwaltozyma polyspora (strain ATCC 22028 / DSM 70294 / BCRC 21397 / CBS 2163 / NBRC 10782 / NRRL Y-8283 / UCD 57-17) (Kluyveromyces polysporus).